Reading from the N-terminus, the 632-residue chain is Lipoma-preferred partner homolog (632 aa).

Disordered regions lie at residues 1-118 (MSHP…RSSL) and 135-249 (SSPY…RSYN). Positions 26-40 (THSFGTPSISVSTQQ) are enriched in polar residues. Over residues 41–53 (PPKKFAPVVAPKP) the composition is skewed to low complexity. The residue at position 109 (K109) is an N6-acetyllysine. A phosphoserine mark is found at S117 and S152. The segment covering 144 to 160 (PGSSSSIASPPVSTPVT) has biased composition (low complexity). 2 stretches are compositionally biased toward polar residues: residues 172-182 (PLTATKKSATK) and 206-239 (SYST…SSGQ). The residue at position 241 (Y241) is a Phosphotyrosine. An Omega-N-methylarginine modification is found at R246. K324 is covalently cross-linked (Glycyl lysine isopeptide (Lys-Gly) (interchain with G-Cter in SUMO1)). LIM zinc-binding domains follow at residues 434 to 493 (GRCA…INTL), 494 to 554 (EQCS…KFAP), and 555 to 623 (RCSV…RIRV).

Belongs to the zyxin/ajuba family. Interacts with PDZ domains of SCRIB, with VASP and with ACTN1/alpha-actinin.

It localises to the nucleus. Its subcellular location is the cytoplasm. The protein localises to the cell junction. Its function is as follows. May play a structural role at sites of cell adhesion in maintaining cell shape and motility. In addition to these structural functions, it may also be implicated in signaling events and activation of gene transcription. May be involved in signal transduction from cell adhesion sites to the nucleus allowing successful integration of signals arising from soluble factors and cell-cell adhesion. Also suggested to serve as a scaffold protein upon which distinct protein complexes are assembled in the cytoplasm and in the nucleus. The protein is Lipoma-preferred partner homolog (Lpp) of Rattus norvegicus (Rat).